A 129-amino-acid chain; its full sequence is SOSS complex subunit C homolog (129 aa).

The disordered stretch occupies residues 105 to 129 (RLEPLPSPATTPTTPNAPPSHNISK).

The protein belongs to the SOSS-C family.

This is SOSS complex subunit C homolog from Drosophila erecta (Fruit fly).